The primary structure comprises 485 residues: NADH-quinone oxidoreductase subunit N (485 aa).

14 helical membrane passes run 8 to 28 (LIALLPLLIVGLTVVVVMLSI), 35 to 55 (FLNATLSVIGLNAALVSLWFV), 71 to 91 (GFAMLYTGLVLLASLATCTFA), 105 to 125 (FYLLVLIASLGGILLANANHL), 127 to 147 (ALFLGIELISLPLFGLIGYAF), 159 to 179 (YTILSAAASSFLLFGMALVYA), 203 to 223 (LLAGFGLMIVGLGFKLSLVPF), 235 to 255 (PAPVSTFLATASKIAIFGVVM), 271 to 291 (VVLGIIAFASIIFGNLMALSQ), 297 to 317 (LLGYSSISHLGYLLVALIALQ), 326 to 346 (VGVYLAGYLFSSLGAFGVVSL), 373 to 393 (AAVMTVMMLSLAGIPMTLGFI), 408 to 430 (WWLVAAVVVGSAIGLYYYLRVAV), and 455 to 475 (IVVLISALLVLVLGVWPQPLI).

It belongs to the complex I subunit 2 family. As to quaternary structure, NDH-1 is composed of 13 different subunits. Subunits NuoA, H, J, K, L, M, N constitute the membrane sector of the complex.

It is found in the cell inner membrane. The enzyme catalyses a quinone + NADH + 5 H(+)(in) = a quinol + NAD(+) + 4 H(+)(out). Its function is as follows. NDH-1 shuttles electrons from NADH, via FMN and iron-sulfur (Fe-S) centers, to quinones in the respiratory chain. The immediate electron acceptor for the enzyme in this species is believed to be ubiquinone. Couples the redox reaction to proton translocation (for every two electrons transferred, four hydrogen ions are translocated across the cytoplasmic membrane), and thus conserves the redox energy in a proton gradient. This Salmonella typhimurium (strain LT2 / SGSC1412 / ATCC 700720) protein is NADH-quinone oxidoreductase subunit N.